A 565-amino-acid polypeptide reads, in one-letter code: Oxygen-dependent choline dehydrogenase (565 aa).

Position 6-35 (6-35) interacts with FAD; sequence DYIIVGAGSAGNTLATRLTEDAGVTVLLLE. The segment at 182–201 is disordered; that stretch reads QQEGFGPMDRTVTKNGRRSS. The active-site Proton acceptor is His-475.

This sequence belongs to the GMC oxidoreductase family. Requires FAD as cofactor.

The enzyme catalyses choline + A = betaine aldehyde + AH2. It carries out the reaction betaine aldehyde + NAD(+) + H2O = glycine betaine + NADH + 2 H(+). It functions in the pathway amine and polyamine biosynthesis; betaine biosynthesis via choline pathway; betaine aldehyde from choline (cytochrome c reductase route): step 1/1. Its function is as follows. Involved in the biosynthesis of the osmoprotectant glycine betaine. Catalyzes the oxidation of choline to betaine aldehyde and betaine aldehyde to glycine betaine at the same rate. In Pseudomonas putida (strain ATCC 47054 / DSM 6125 / CFBP 8728 / NCIMB 11950 / KT2440), this protein is Oxygen-dependent choline dehydrogenase.